Consider the following 277-residue polypeptide: Deoxyguanosine kinase, mitochondrial (277 aa).

The transit peptide at 1–39 (MAAGRFLLRRLRASFRSPLRNALVDAPHARAMHDGGGPR) directs the protein to the mitochondrion. Residue 45 to 53 (GNIAVGKST) coordinates ATP. Substrate-binding residues include E70, Y100, Q111, and R118. The Proton acceptor role is filled by E141. R142 and D147 together coordinate substrate. Residue 206–208 (RDR) coordinates ATP. A substrate-binding site is contributed by E211. 254 to 256 (EDF) contacts ATP.

It belongs to the DCK/DGK family. In terms of assembly, homodimer. As to expression, spleen and thymus. Expressed at much lower levels in the brain and liver.

The protein localises to the mitochondrion. It is found in the cytoplasm. The catalysed reaction is 2'-deoxyguanosine + ATP = dGMP + ADP + H(+). It carries out the reaction 2'-deoxyadenosine + ATP = dAMP + ADP + H(+). Its function is as follows. Phosphorylates deoxyguanosine and deoxyadenosine in the mitochondrial matrix, with the highest efficiency for deoxyguanosine. In non-replicating cells, where cytosolic dNTP synthesis is down-regulated, mtDNA synthesis depends solely on DGUOK and TK2. Phosphorylates certain nucleoside analogs. Widely used as target of antiviral and chemotherapeutic agents. The chain is Deoxyguanosine kinase, mitochondrial (Dguok) from Mus musculus (Mouse).